The sequence spans 27 residues: KIKWFKTMKSIAKFIAKEQMKKHLGGE.

Expressed by the venom gland.

It is found in the secreted. Forms pore that permeabilize the cell membrane. Promotes efflux of calcium from synaptosomes, causes hemolysis, and dissipates voltage gradients across muscle membrane. Potently inhibits the growth of bacteria, yeast and Leishmania. May function both in the prey capture strategy as well as protection from infectious organisms arising from prey ingestion. This chain is M-lycotoxin-Hc2a, found in Hogna carolinensis (Carolina wolf spider).